A 695-amino-acid polypeptide reads, in one-letter code: Eukaryotic translation initiation factor 3 subunit B (695 aa).

Residues 1-10 show a composition bias toward basic and acidic residues; the sequence is MAKKKGDEKA. Positions 1–43 are disordered; that stretch reads MAKKKGDEKANPAPQSDNEEQNFEEEPDFDDPEDFVEIPEEEL. Over residues 17–43 the composition is skewed to acidic residues; it reads DNEEQNFEEEPDFDDPEDFVEIPEEEL. The RRM domain occupies 60–144; sequence NVVVVDGCPQ…HTFLVNLFTD (85 aa). WD repeat units follow at residues 164–205, 295–335, 338–373, and 444–486; these read KVQS…PLLL, PPDE…LLDK, IKIP…TLLE, and EIKE…APTL.

The protein belongs to the eIF-3 subunit B family. In terms of assembly, component of the eukaryotic translation initiation factor 3 (eIF-3) complex.

It localises to the cytoplasm. Its function is as follows. RNA-binding component of the eukaryotic translation initiation factor 3 (eIF-3) complex, which is involved in protein synthesis of a specialized repertoire of mRNAs and, together with other initiation factors, stimulates binding of mRNA and methionyl-tRNAi to the 40S ribosome. The eIF-3 complex specifically targets and initiates translation of a subset of mRNAs involved in cell proliferation. In Bombyx mori (Silk moth), this protein is Eukaryotic translation initiation factor 3 subunit B.